The sequence spans 424 residues: Riboflavin biosynthesis protein RibBA (424 aa).

The interval 1 to 206 (MVTCEAGIAS…VDDLITYRWT (206 aa)) is DHBP synthase. D-ribulose 5-phosphate-binding positions include 32–33 (RE), aspartate 37, 145–149 (RPGHT), and glutamate 169. Glutamate 33 contributes to the Mg(2+) binding site. A Mg(2+)-binding site is contributed by histidine 148. The GTP cyclohydrolase II stretch occupies residues 207 to 424 (FDSLVEHVSS…YETVERTSCC (218 aa)). 257 to 261 (RVHSE) is a binding site for GTP. Cysteine 262, cysteine 273, and cysteine 275 together coordinate Zn(2+). GTP is bound by residues glutamine 278, 301–303 (EGR), and threonine 323. Residue aspartate 335 is the Proton acceptor; for GTP cyclohydrolase activity of the active site. Residue arginine 337 is the Nucleophile; for GTP cyclohydrolase activity of the active site. Residues threonine 358 and lysine 363 each coordinate GTP.

The protein in the N-terminal section; belongs to the DHBP synthase family. It in the C-terminal section; belongs to the GTP cyclohydrolase II family. Requires Mg(2+) as cofactor. Mn(2+) serves as cofactor. It depends on Zn(2+) as a cofactor.

It carries out the reaction D-ribulose 5-phosphate = (2S)-2-hydroxy-3-oxobutyl phosphate + formate + H(+). The catalysed reaction is GTP + 4 H2O = 2,5-diamino-6-hydroxy-4-(5-phosphoribosylamino)-pyrimidine + formate + 2 phosphate + 3 H(+). The protein operates within cofactor biosynthesis; riboflavin biosynthesis; 2-hydroxy-3-oxobutyl phosphate from D-ribulose 5-phosphate: step 1/1. It functions in the pathway cofactor biosynthesis; riboflavin biosynthesis; 5-amino-6-(D-ribitylamino)uracil from GTP: step 1/4. Catalyzes the conversion of D-ribulose 5-phosphate to formate and 3,4-dihydroxy-2-butanone 4-phosphate. Functionally, catalyzes the conversion of GTP to 2,5-diamino-6-ribosylamino-4(3H)-pyrimidinone 5'-phosphate (DARP), formate and pyrophosphate. The sequence is that of Riboflavin biosynthesis protein RibBA from Chlamydia muridarum (strain MoPn / Nigg).